A 431-amino-acid polypeptide reads, in one-letter code: tRNA(Ile)-lysidine synthase (431 aa).

19–24 contributes to the ATP binding site; sequence STGIDS.

It belongs to the tRNA(Ile)-lysidine synthase family.

Its subcellular location is the cytoplasm. It catalyses the reaction cytidine(34) in tRNA(Ile2) + L-lysine + ATP = lysidine(34) in tRNA(Ile2) + AMP + diphosphate + H(+). Its function is as follows. Ligates lysine onto the cytidine present at position 34 of the AUA codon-specific tRNA(Ile) that contains the anticodon CAU, in an ATP-dependent manner. Cytidine is converted to lysidine, thus changing the amino acid specificity of the tRNA from methionine to isoleucine. This Staphylococcus aureus (strain COL) protein is tRNA(Ile)-lysidine synthase.